Consider the following 183-residue polypeptide: Protein GrpE (183 aa).

Residues 1–14 show a composition bias toward basic and acidic residues; it reads MSNEENKINEEALK. Residues 1-20 form a disordered region; that stretch reads MSNEENKINEEALKQQDAAE.

This sequence belongs to the GrpE family. In terms of assembly, homodimer.

The protein localises to the cytoplasm. Functionally, participates actively in the response to hyperosmotic and heat shock by preventing the aggregation of stress-denatured proteins, in association with DnaK and GrpE. It is the nucleotide exchange factor for DnaK and may function as a thermosensor. Unfolded proteins bind initially to DnaJ; upon interaction with the DnaJ-bound protein, DnaK hydrolyzes its bound ATP, resulting in the formation of a stable complex. GrpE releases ADP from DnaK; ATP binding to DnaK triggers the release of the substrate protein, thus completing the reaction cycle. Several rounds of ATP-dependent interactions between DnaJ, DnaK and GrpE are required for fully efficient folding. The protein is Protein GrpE of Vibrio vulnificus (strain CMCP6).